Consider the following 287-residue polypeptide: Elongation factor Ts (287 aa).

The involved in Mg(2+) ion dislocation from EF-Tu stretch occupies residues 80 to 83 (TDFL).

It belongs to the EF-Ts family.

It is found in the cytoplasm. Associates with the EF-Tu.GDP complex and induces the exchange of GDP to GTP. It remains bound to the aminoacyl-tRNA.EF-Tu.GTP complex up to the GTP hydrolysis stage on the ribosome. In Pseudomonas syringae pv. syringae (strain B728a), this protein is Elongation factor Ts.